Here is a 490-residue protein sequence, read N- to C-terminus: AP-5 complex subunit mu-1 (490 aa).

Residues 206 to 476 (KAQISISITE…LISSDYYIWN (271 aa)) form the MHD domain.

Belongs to the adaptor complexes medium subunit family. As to quaternary structure, probably part of the adaptor protein complex 5 (AP-5) a tetramer composed of AP5B1, AP5M1, AP5S1 and AP5Z1. Widely expressed, including in small intestine and testis. In small intestine, highly expressed in cytoplasm of villi epithelial cells and internal glands. In testis, selectively expressed in maturing sperm cells (at protein level).

It localises to the cytoplasm. It is found in the cytosol. The protein localises to the late endosome membrane. Its subcellular location is the lysosome membrane. As part of AP-5, a probable fifth adaptor protein complex it may be involved in endosomal transport. The sequence is that of AP-5 complex subunit mu-1 (Ap5m1) from Mus musculus (Mouse).